Here is a 648-residue protein sequence, read N- to C-terminus: Chaperone protein HtpG (648 aa).

Positions 1–349 (MTTEHAAGAQ…SSDLPLNVSR (349 aa)) are a; substrate-binding. The segment at 350-570 (EILQESKDID…EHDVGMNLAR (221 aa)) is b. Residues 571-648 (ILKAAGQQAP…MAMGGSAGTD (78 aa)) are c.

Belongs to the heat shock protein 90 family. Homodimer.

Its subcellular location is the cytoplasm. Molecular chaperone. Has ATPase activity. The protein is Chaperone protein HtpG of Aromatoleum aromaticum (strain DSM 19018 / LMG 30748 / EbN1) (Azoarcus sp. (strain EbN1)).